Here is a 62-residue protein sequence, read N- to C-terminus: DNA gyrase inhibitor YacG (62 aa).

4 residues coordinate Zn(2+): C9, C12, C27, and C31. Residues 43-53 are compositionally biased toward basic and acidic residues; sequence GYRIPGEKAPE. A disordered region spans residues 43 to 62; the sequence is GYRIPGEKAPESGDEEPGDE.

The protein belongs to the DNA gyrase inhibitor YacG family. As to quaternary structure, interacts with GyrB. It depends on Zn(2+) as a cofactor.

Inhibits all the catalytic activities of DNA gyrase by preventing its interaction with DNA. Acts by binding directly to the C-terminal domain of GyrB, which probably disrupts DNA binding by the gyrase. The sequence is that of DNA gyrase inhibitor YacG from Citrifermentans bemidjiense (strain ATCC BAA-1014 / DSM 16622 / JCM 12645 / Bem) (Geobacter bemidjiensis).